Here is a 467-residue protein sequence, read N- to C-terminus: Nuclear distribution protein nudF (467 aa).

The LisH domain occupies 9–41; that stretch reads QAEELHKSIIAYLASVNLTESSAALRAELGDSV. Positions 60 to 87 form a coiled coil; it reads TSVVRLQKKIMDLESRCAALQSELDSAT. WD repeat units lie at residues 113-154, 156-196, 200-247, 250-289, 292-352, 354-393, 398-428, and 429-466; these read GHRN…RTVK, HTKA…KNIR, GHDH…CVKT, GHVDWVRAVAPSIDGRFLLAAGDDRIPRLWDLSSAETKST, GHEH…IKTL, GHDNWVRALAFHPGGKHLLSVADDKTIRCWDLTQECKCVR, AHGHFVTCLRWAPPLIKDGGANGEAETNGTP, and AATSTTNGVRPDPNVATKISIRCVIATGSVDQKVRIFA. A disordered region spans residues 417–439; it reads GANGEAETNGTPAATSTTNGVRP. Polar residues predominate over residues 422–436; it reads AETNGTPAATSTTNG.

This sequence belongs to the WD repeat LIS1/nudF family. Self-associates. Interacts with nudE and dynein.

Its subcellular location is the cytoplasm. It is found in the cytoskeleton. The protein resides in the spindle pole. In terms of biological role, positively regulates the activity of the minus-end directed microtubule motor protein dynein. May enhance dynein-mediated microtubule sliding by targeting dynein to the microtubule plus end. Required for nuclear migration during vegetative growth as well as development. Required for retrograde early endosome (EE) transport from the hyphal tip. Required for localization of dynein to the mitotic spindle poles. Recruits additional proteins to the dynein complex at SPBs. The protein is Nuclear distribution protein nudF of Aspergillus fumigatus (strain CBS 144.89 / FGSC A1163 / CEA10) (Neosartorya fumigata).